We begin with the raw amino-acid sequence, 336 residues long: Formimidoylglutamase (336 aa).

Mn(2+) contacts are provided by histidine 129, aspartate 160, histidine 162, aspartate 164, aspartate 257, and aspartate 259.

Belongs to the arginase family. The cofactor is Mn(2+).

It carries out the reaction N-formimidoyl-L-glutamate + H2O = formamide + L-glutamate. It participates in amino-acid degradation; L-histidine degradation into L-glutamate; L-glutamate from N-formimidoyl-L-glutamate (hydrolase route): step 1/1. In terms of biological role, catalyzes the conversion of N-formimidoyl-L-glutamate to L-glutamate and formamide. This chain is Formimidoylglutamase, found in Vibrio vulnificus (strain YJ016).